A 134-amino-acid polypeptide reads, in one-letter code: Syncollin (134 aa).

Residues 1–21 form the signal peptide; it reads MSPLRPLLLALALASVPCAQG.

As to quaternary structure, monomer and homooligomer; most probably hexameric. Interacts with GP2. Post-translationally, contains intrachain disulfide bonds.

The protein resides in the zymogen granule membrane. It localises to the zymogen granule lumen. Functionally, functions in exocytosis in pancreatic acinar cells regulating the fusion of zymogen granules with each other. May have a pore-forming activity on membranes and regulate exocytosis in other exocrine tissues. This Homo sapiens (Human) protein is Syncollin (SYCN).